Consider the following 376-residue polypeptide: uncharacterized protein (376 aa).

The chain crosses the membrane as a helical span at residues 19 to 39 (FVLISLILLLNLGLLLGIQIY).

This sequence to S.pombe SpAC5H10.12c.

The protein localises to the cytoplasm. It localises to the nucleus. Its subcellular location is the membrane. This is an uncharacterized protein from Schizosaccharomyces pombe (strain 972 / ATCC 24843) (Fission yeast).